Consider the following 95-residue polypeptide: Aspartyl/glutamyl-tRNA(Asn/Gln) amidotransferase subunit C (95 aa).

Belongs to the GatC family. As to quaternary structure, heterotrimer of A, B and C subunits.

The enzyme catalyses L-glutamyl-tRNA(Gln) + L-glutamine + ATP + H2O = L-glutaminyl-tRNA(Gln) + L-glutamate + ADP + phosphate + H(+). It catalyses the reaction L-aspartyl-tRNA(Asn) + L-glutamine + ATP + H2O = L-asparaginyl-tRNA(Asn) + L-glutamate + ADP + phosphate + 2 H(+). Allows the formation of correctly charged Asn-tRNA(Asn) or Gln-tRNA(Gln) through the transamidation of misacylated Asp-tRNA(Asn) or Glu-tRNA(Gln) in organisms which lack either or both of asparaginyl-tRNA or glutaminyl-tRNA synthetases. The reaction takes place in the presence of glutamine and ATP through an activated phospho-Asp-tRNA(Asn) or phospho-Glu-tRNA(Gln). This is Aspartyl/glutamyl-tRNA(Asn/Gln) amidotransferase subunit C from Ruegeria sp. (strain TM1040) (Silicibacter sp.).